A 387-amino-acid chain; its full sequence is Galactokinase (387 aa).

Position 33–36 (33–36) interacts with substrate; sequence EHID. Residues Ser67 and 124-130 contribute to the ATP site; that span reads GAGLSSS. Positions 130 and 162 each coordinate Mg(2+). The active-site Proton acceptor is Asp174. Residue Tyr224 coordinates substrate.

Belongs to the GHMP kinase family. GalK subfamily.

The protein resides in the cytoplasm. The enzyme catalyses alpha-D-galactose + ATP = alpha-D-galactose 1-phosphate + ADP + H(+). It participates in carbohydrate metabolism; galactose metabolism. Functionally, catalyzes the transfer of the gamma-phosphate of ATP to D-galactose to form alpha-D-galactose-1-phosphate (Gal-1-P). This is Galactokinase from Clostridium perfringens (strain ATCC 13124 / DSM 756 / JCM 1290 / NCIMB 6125 / NCTC 8237 / Type A).